The sequence spans 414 residues: Multifunctional CCA protein (414 aa).

Residues glycine 8 and arginine 11 each contribute to the ATP site. CTP contacts are provided by glycine 8 and arginine 11. The Mg(2+) site is built by aspartate 21 and aspartate 23. ATP-binding residues include arginine 91, arginine 137, and arginine 140. Positions 91, 137, and 140 each coordinate CTP. An HD domain is found at 228–329; that stretch reads TGIHTLMTLA…LKLFDAVDVW (102 aa).

The protein belongs to the tRNA nucleotidyltransferase/poly(A) polymerase family. Bacterial CCA-adding enzyme type 1 subfamily. As to quaternary structure, monomer. Can also form homodimers and oligomers. Mg(2+) serves as cofactor. The cofactor is Ni(2+).

It carries out the reaction a tRNA precursor + 2 CTP + ATP = a tRNA with a 3' CCA end + 3 diphosphate. The enzyme catalyses a tRNA with a 3' CCA end + 2 CTP + ATP = a tRNA with a 3' CCACCA end + 3 diphosphate. Functionally, catalyzes the addition and repair of the essential 3'-terminal CCA sequence in tRNAs without using a nucleic acid template. Adds these three nucleotides in the order of C, C, and A to the tRNA nucleotide-73, using CTP and ATP as substrates and producing inorganic pyrophosphate. tRNA 3'-terminal CCA addition is required both for tRNA processing and repair. Also involved in tRNA surveillance by mediating tandem CCA addition to generate a CCACCA at the 3' terminus of unstable tRNAs. While stable tRNAs receive only 3'-terminal CCA, unstable tRNAs are marked with CCACCA and rapidly degraded. This chain is Multifunctional CCA protein, found in Serratia proteamaculans (strain 568).